We begin with the raw amino-acid sequence, 611 residues long: Chaperone protein HscA (611 aa).

It belongs to the heat shock protein 70 family.

In terms of biological role, chaperone involved in the maturation of iron-sulfur cluster-containing proteins. Has a low intrinsic ATPase activity which is markedly stimulated by HscB. Involved in the maturation of IscU. The sequence is that of Chaperone protein HscA from Buchnera aphidicola subsp. Acyrthosiphon pisum (strain 5A).